The primary structure comprises 313 residues: Nucleotide-binding protein Swit_0399 (313 aa).

Glycine 20–lysine 27 contributes to the ATP binding site. Aspartate 73 to threonine 76 provides a ligand contact to GTP. Residues proline 289 to serine 313 are disordered. A compositionally biased stretch (basic and acidic residues) spans arginine 292–alanine 303.

Belongs to the RapZ-like family.

Displays ATPase and GTPase activities. The chain is Nucleotide-binding protein Swit_0399 from Rhizorhabdus wittichii (strain DSM 6014 / CCUG 31198 / JCM 15750 / NBRC 105917 / EY 4224 / RW1) (Sphingomonas wittichii).